A 652-amino-acid polypeptide reads, in one-letter code: NAD(P)H-quinone oxidoreductase subunit 5, chloroplastic (652 aa).

The next 16 helical transmembrane spans lie at W9–F29, Y40–F60, P91–T111, F124–L144, I147–T167, G188–I208, L225–P245, T258–A278, F289–A309, L327–M347, A354–N374, G395–W415, A424–F444, T482–F502, L526–I546, and I630–L650.

The protein belongs to the complex I subunit 5 family. As to quaternary structure, NDH is composed of at least 16 different subunits, 5 of which are encoded in the nucleus.

The protein localises to the plastid. Its subcellular location is the chloroplast thylakoid membrane. It carries out the reaction a plastoquinone + NADH + (n+1) H(+)(in) = a plastoquinol + NAD(+) + n H(+)(out). The catalysed reaction is a plastoquinone + NADPH + (n+1) H(+)(in) = a plastoquinol + NADP(+) + n H(+)(out). In terms of biological role, NDH shuttles electrons from NAD(P)H:plastoquinone, via FMN and iron-sulfur (Fe-S) centers, to quinones in the photosynthetic chain and possibly in a chloroplast respiratory chain. The immediate electron acceptor for the enzyme in this species is believed to be plastoquinone. Couples the redox reaction to proton translocation, and thus conserves the redox energy in a proton gradient. The polypeptide is NAD(P)H-quinone oxidoreductase subunit 5, chloroplastic (ndhF) (Mesostigma viride (Green alga)).